A 180-amino-acid polypeptide reads, in one-letter code: Negative modulator of initiation of replication (180 aa).

The segment at 87-88 is interaction with DNA; the sequence is AV.

The protein belongs to the SeqA family. Homodimer. Polymerizes to form helical filaments.

The protein localises to the cytoplasm. In terms of biological role, negative regulator of replication initiation, which contributes to regulation of DNA replication and ensures that replication initiation occurs exactly once per chromosome per cell cycle. Binds to pairs of hemimethylated GATC sequences in the oriC region, thus preventing assembly of replication proteins and re-initiation at newly replicated origins. Repression is relieved when the region becomes fully methylated. The sequence is that of Negative modulator of initiation of replication from Ferrimonas balearica (strain DSM 9799 / CCM 4581 / KCTC 23876 / PAT).